Reading from the N-terminus, the 38-residue chain is Photosystem II reaction center protein X 2 (38 aa).

Residues 8–28 (FLWSLVYGAVVLGLLFGAIVF) traverse the membrane as a helical segment.

This sequence belongs to the PsbX family. Type 1 subfamily. PSII is composed of 1 copy each of membrane proteins PsbA, PsbB, PsbC, PsbD, PsbE, PsbF, PsbH, PsbI, PsbJ, PsbK, PsbL, PsbM, PsbT, PsbX, PsbY, PsbZ, Psb30/Ycf12, peripheral proteins PsbO, CyanoQ (PsbQ), PsbU, PsbV and a large number of cofactors. It forms dimeric complexes.

Its subcellular location is the cellular thylakoid membrane. Its function is as follows. Involved in the binding and/or turnover of quinones at the Q(B) site of photosystem II (PSII). PSII is a light-driven water plastoquinone oxidoreductase, using light energy to abstract electrons from H(2)O, generating a proton gradient subsequently used for ATP formation. The chain is Photosystem II reaction center protein X 2 from Synechococcus sp. (strain JA-3-3Ab) (Cyanobacteria bacterium Yellowstone A-Prime).